A 217-amino-acid polypeptide reads, in one-letter code: UPF0319 protein VS_II0881 (217 aa).

The signal sequence occupies residues Met-1–Ala-21.

The protein belongs to the UPF0319 family.

The protein is UPF0319 protein VS_II0881 of Vibrio atlanticus (strain LGP32) (Vibrio splendidus (strain Mel32)).